We begin with the raw amino-acid sequence, 194 residues long: GTP cyclohydrolase-2 (194 aa).

Residue 47-51 (RVHSE) participates in GTP binding. Zn(2+)-binding residues include Cys-52, Cys-63, and Cys-65. Residues Gln-68, 90–92 (EGR), and Thr-112 contribute to the GTP site. Catalysis depends on Asp-124, which acts as the Proton acceptor. Arg-126 serves as the catalytic Nucleophile. GTP-binding residues include Thr-147 and Lys-152.

Belongs to the GTP cyclohydrolase II family. Homodimer. Zn(2+) is required as a cofactor.

It catalyses the reaction GTP + 4 H2O = 2,5-diamino-6-hydroxy-4-(5-phosphoribosylamino)-pyrimidine + formate + 2 phosphate + 3 H(+). Its pathway is cofactor biosynthesis; riboflavin biosynthesis; 5-amino-6-(D-ribitylamino)uracil from GTP: step 1/4. Its function is as follows. Catalyzes the conversion of GTP to 2,5-diamino-6-ribosylamino-4(3H)-pyrimidinone 5'-phosphate (DARP), formate and pyrophosphate. The sequence is that of GTP cyclohydrolase-2 from Buchnera aphidicola subsp. Acyrthosiphon pisum (strain APS) (Acyrthosiphon pisum symbiotic bacterium).